A 208-amino-acid chain; its full sequence is MTQLPRRGVCLVISAPSGAGKSTIANALRASEPTLRHSVSVTTRSPRPGEVEGVHYHFRDIAEFRRMAADGELLEWAEVFGRGYGTPRAPVEEALDAGHDMVFDIDWQGHRLLRAALPDDVVSLFVLPPSLEELERRLNKRASDHPEEIARRMKAALDEISHWSEFDHTIINSDLDTAISQARSVLTAARLATRRQRNLLDMVASFSR.

One can recognise a Guanylate kinase-like domain in the interval 8–187; that stretch reads GVCLVISAPS…AISQARSVLT (180 aa). An ATP-binding site is contributed by 15 to 22; that stretch reads APSGAGKS.

It belongs to the guanylate kinase family.

Its subcellular location is the cytoplasm. The enzyme catalyses GMP + ATP = GDP + ADP. In terms of biological role, essential for recycling GMP and indirectly, cGMP. This Gluconobacter oxydans (strain 621H) (Gluconobacter suboxydans) protein is Guanylate kinase.